The following is a 334-amino-acid chain: Glyceraldehyde-3-phosphate dehydrogenase (334 aa).

NAD(+) contacts are provided by residues 10-11 (RI), aspartate 33, lysine 77, and threonine 119. Residues 149–151 (SCT), threonine 180, 209–210 (TG), and arginine 232 each bind D-glyceraldehyde 3-phosphate. Residue cysteine 150 is the Nucleophile of the active site. Residue asparagine 314 coordinates NAD(+).

Belongs to the glyceraldehyde-3-phosphate dehydrogenase family. In terms of assembly, homotetramer.

It is found in the cytoplasm. The enzyme catalyses D-glyceraldehyde 3-phosphate + phosphate + NAD(+) = (2R)-3-phospho-glyceroyl phosphate + NADH + H(+). The protein operates within carbohydrate degradation; glycolysis; pyruvate from D-glyceraldehyde 3-phosphate: step 1/5. Catalyzes the oxidative phosphorylation of glyceraldehyde 3-phosphate (G3P) to 1,3-bisphosphoglycerate (BPG) using the cofactor NAD. The first reaction step involves the formation of a hemiacetal intermediate between G3P and a cysteine residue, and this hemiacetal intermediate is then oxidized to a thioester, with concomitant reduction of NAD to NADH. The reduced NADH is then exchanged with the second NAD, and the thioester is attacked by a nucleophilic inorganic phosphate to produce BPG. This is Glyceraldehyde-3-phosphate dehydrogenase (gap) from Chlamydia trachomatis serovar D (strain ATCC VR-885 / DSM 19411 / UW-3/Cx).